Here is a 312-residue protein sequence, read N- to C-terminus: Ribosomal RNA small subunit methyltransferase H (312 aa).

Residues 33–35, Asp53, Phe79, Asp100, and Gln107 each bind S-adenosyl-L-methionine; that span reads AGH.

It belongs to the methyltransferase superfamily. RsmH family.

It is found in the cytoplasm. It carries out the reaction cytidine(1402) in 16S rRNA + S-adenosyl-L-methionine = N(4)-methylcytidine(1402) in 16S rRNA + S-adenosyl-L-homocysteine + H(+). Specifically methylates the N4 position of cytidine in position 1402 (C1402) of 16S rRNA. The chain is Ribosomal RNA small subunit methyltransferase H from Clostridium acetobutylicum (strain ATCC 824 / DSM 792 / JCM 1419 / IAM 19013 / LMG 5710 / NBRC 13948 / NRRL B-527 / VKM B-1787 / 2291 / W).